The primary structure comprises 205 residues: Dephospho-CoA kinase (205 aa).

Residues Val-5–His-201 form the DPCK domain. Gly-13–Thr-18 provides a ligand contact to ATP.

This sequence belongs to the CoaE family.

Its subcellular location is the cytoplasm. It catalyses the reaction 3'-dephospho-CoA + ATP = ADP + CoA + H(+). Its pathway is cofactor biosynthesis; coenzyme A biosynthesis; CoA from (R)-pantothenate: step 5/5. Catalyzes the phosphorylation of the 3'-hydroxyl group of dephosphocoenzyme A to form coenzyme A. The protein is Dephospho-CoA kinase of Shewanella oneidensis (strain ATCC 700550 / JCM 31522 / CIP 106686 / LMG 19005 / NCIMB 14063 / MR-1).